The following is a 321-amino-acid chain: Olfactory receptor 56B34 (321 aa).

Topologically, residues 1 to 36 (MGTALHETNSSEVHVSEFILLGFPGIHEFQIWLSLP) are extracellular. A helical membrane pass occupies residues 37–57 (MALLYIVALGANLLILITIYL). At 58-70 (EPTLHQPMYQFLG) the chain is on the cytoplasmic side. The helical transmembrane segment at 71–91 (ILAAVDIGLATTSMPKILAIL) threads the bilayer. Topologically, residues 92–105 (WFDAKTISLPECFA) are extracellular. Cys103 and Cys185 are disulfide-bonded. The chain crosses the membrane as a helical span at residues 106–126 (QIYAIHTFMCMESGVFLCMAI). Residues 127 to 128 (DR) lie on the Cytoplasmic side of the membrane. Residues 129-149 (YVAICYPLQYPSIVTEAFVIK) traverse the membrane as a helical segment. Over 150–207 (ATLSMLLRNGLLTIPVPVLAAQRQYCSRNEIDHCLCSNLGVISLACDDITVNRFYQLA) the chain is Extracellular. A helical transmembrane segment spans residues 208 to 228 (LAWLVVGSDMILVYASYALII). At 229–250 (RSVLRLNSTEAASKALSTCSSH) the chain is on the cytoplasmic side. A helical transmembrane segment spans residues 251-271 (LILIMFYYTAIVIVSVTHLAG). Over 272-275 (RRVP) the chain is Extracellular. A helical transmembrane segment spans residues 276–296 (LIPVLLNVMHIVIPPSLNPVV). At 297-321 (YALRTQELKVGFRKVFSLSEFVSRK) the chain is on the cytoplasmic side.

It belongs to the G-protein coupled receptor 1 family.

The protein localises to the cell membrane. Functionally, odorant receptor. This Mus musculus (Mouse) protein is Olfactory receptor 56B34.